A 497-amino-acid chain; its full sequence is ATP synthase subunit alpha 2 (497 aa).

167–174 (GERATGKT) lines the ATP pocket.

This sequence belongs to the ATPase alpha/beta chains family. In terms of assembly, F-type ATPases have 2 components, CF(1) - the catalytic core - and CF(0) - the membrane proton channel. CF(1) has five subunits: alpha(3), beta(3), gamma(1), delta(1), epsilon(1). CF(0) has four main subunits: a(1), b(1), b'(1) and c(9-12).

It localises to the cell inner membrane. It catalyses the reaction ATP + H2O + 4 H(+)(in) = ADP + phosphate + 5 H(+)(out). Produces ATP from ADP in the presence of a proton gradient across the membrane. The alpha chain is a regulatory subunit. The protein is ATP synthase subunit alpha 2 of Cereibacter sphaeroides (strain ATCC 17029 / ATH 2.4.9) (Rhodobacter sphaeroides).